The chain runs to 983 residues: Type IV secretion system protein CagE (983 aa).

Position 597–604 (597–604) interacts with ATP; the sequence is GSTGSGKT.

The protein belongs to the TrbE/VirB4 family. As to quaternary structure, component of the Cag type IV secretion system, which is composed of a wheel-shaped outer membrane complex (OMC) and an inner membrane complex (IMC). Interacts with CagV and CagBeta.

Its subcellular location is the cell inner membrane. The enzyme catalyses ATP + H2O + cellular proteinSide 1 = ADP + phosphate + cellular proteinSide 2.. ATPase component of the type IV secretion system Cag (Cag-T4SS). Acts as a molecular motor to provide the energy that is required for the export of proteins. Required for CagA translocation and induction of IL-8 in host gastric epithelial cells. Plays a key role in Cag-T4SS pilus biogenesis, especially in the localization and stabilization of the pilus-associated components CagI, CagL and the surface protein CagH. Is also critical for assembly of the entire cytoplasmic portion of the Cag inner membrane complex (IMC). This is Type IV secretion system protein CagE from Helicobacter pylori (strain ATCC 700392 / 26695) (Campylobacter pylori).